Consider the following 408-residue polypeptide: Peptidase T (408 aa).

H78 contacts Zn(2+). D80 is a catalytic residue. Residue D140 participates in Zn(2+) binding. The Proton acceptor role is filled by E173. Zn(2+) is bound by residues E174, D196, and H379.

It belongs to the peptidase M20B family. It depends on Zn(2+) as a cofactor.

The protein localises to the cytoplasm. The catalysed reaction is Release of the N-terminal residue from a tripeptide.. Cleaves the N-terminal amino acid of tripeptides. The protein is Peptidase T of Escherichia coli (strain K12 / MC4100 / BW2952).